A 336-amino-acid chain; its full sequence is Holliday junction branch migration complex subunit RuvB (336 aa).

Residues 4 to 184 (ADRLISAGTT…FGIVQRLEFY (181 aa)) are large ATPase domain (RuvB-L). Residues I23, R24, G65, K68, T69, T70, 131-133 (EDY), R174, Y184, and R221 each bind ATP. Mg(2+) is bound at residue T69. A small ATPAse domain (RuvB-S) region spans residues 185-255 (QVPDLQYIVS…IAAQALDMLN (71 aa)). Residues 258 to 336 (AEGFDYMDRK…HFGITPPEMP (79 aa)) are head domain (RuvB-H). DNA-binding residues include R294, R313, and R318.

Belongs to the RuvB family. As to quaternary structure, homohexamer. Forms an RuvA(8)-RuvB(12)-Holliday junction (HJ) complex. HJ DNA is sandwiched between 2 RuvA tetramers; dsDNA enters through RuvA and exits via RuvB. An RuvB hexamer assembles on each DNA strand where it exits the tetramer. Each RuvB hexamer is contacted by two RuvA subunits (via domain III) on 2 adjacent RuvB subunits; this complex drives branch migration. In the full resolvosome a probable DNA-RuvA(4)-RuvB(12)-RuvC(2) complex forms which resolves the HJ.

It localises to the cytoplasm. It catalyses the reaction ATP + H2O = ADP + phosphate + H(+). Functionally, the RuvA-RuvB-RuvC complex processes Holliday junction (HJ) DNA during genetic recombination and DNA repair, while the RuvA-RuvB complex plays an important role in the rescue of blocked DNA replication forks via replication fork reversal (RFR). RuvA specifically binds to HJ cruciform DNA, conferring on it an open structure. The RuvB hexamer acts as an ATP-dependent pump, pulling dsDNA into and through the RuvAB complex. RuvB forms 2 homohexamers on either side of HJ DNA bound by 1 or 2 RuvA tetramers; 4 subunits per hexamer contact DNA at a time. Coordinated motions by a converter formed by DNA-disengaged RuvB subunits stimulates ATP hydrolysis and nucleotide exchange. Immobilization of the converter enables RuvB to convert the ATP-contained energy into a lever motion, pulling 2 nucleotides of DNA out of the RuvA tetramer per ATP hydrolyzed, thus driving DNA branch migration. The RuvB motors rotate together with the DNA substrate, which together with the progressing nucleotide cycle form the mechanistic basis for DNA recombination by continuous HJ branch migration. Branch migration allows RuvC to scan DNA until it finds its consensus sequence, where it cleaves and resolves cruciform DNA. The protein is Holliday junction branch migration complex subunit RuvB of Escherichia coli (strain ATCC 8739 / DSM 1576 / NBRC 3972 / NCIMB 8545 / WDCM 00012 / Crooks).